The primary structure comprises 180 residues: MKCLLLALGLALACGIQAIIVTQTMKGLDIQKVAGTWYSLAMAASDISLLDAQSAPLRVYVEELKPTPEGNLEILLQKWENGECAQKKIIAEKTKIPAVFKIDALNENKVLVLDTDYKKYLLFCMENSAEPEQSLACQCLVRTPEVDKEALEKFDKALKALPMHIRLAFNPTQLEGQCHV.

The first 18 residues, 1 to 18 (MKCLLLALGLALACGIQA), serve as a signal peptide directing secretion. Disulfide bonds link Cys84/Cys178, Cys124/Cys137, and Cys124/Cys139.

The protein belongs to the calycin superfamily. Lipocalin family. Under physiological conditions beta-lactoglobulin exists as an equilibrium mixture of monomeric and dimeric forms. Interaction with LMBR1L is controversial. Post-translationally, alternate disulfide bonds occur in equal amounts. In terms of tissue distribution, synthesized in mammary gland and secreted in milk.

The protein localises to the secreted. In terms of biological role, primary component of whey, it binds retinol and is probably involved in the transport of that molecule. In Capra hircus (Goat), this protein is Beta-lactoglobulin (LGB).